Consider the following 1830-residue polypeptide: Guanine nucleotide exchange factor SPIKE 1 (1830 aa).

M1 is subject to N-acetylmethionine. The interval 285–304 is disordered; the sequence is NTGESASPSSPLAPSMTASS. The span at 289–304 shows a compositional bias: low complexity; that stretch reads SASPSSPLAPSMTASS. The region spanning 463 to 622 is the C2 DOCK-type domain; it reads FHCLYVYPVA…NIFKLRLRLC (160 aa). S1051 is modified (phosphoserine). T1079 carries the phosphothreonine modification. The residue at position 1095 (S1095) is a Phosphoserine. Residues 1379–1828 form the DOCKER domain; sequence MAFAPVPDLH…LSHYIPAILS (450 aa).

Belongs to the DOCK family. In terms of assembly, homodimer. Component of SCAR/WAVE and ARP2/3 complexes. Interacts directly with ARAC4/ROP2, ARAC1/ROP3, ARAC5/ROP4, ARAC6/ROP5, ARAC8/ROP10, ARAC9/ROP8, SCAR1, SCAR2, SCAR3, SCAR4, ABI1, ABI2, ABI3 and ABI4. Binds to the inactive GDP-bound form of ARAC3/ROP6. In terms of tissue distribution, expressed ubiquitously, in roots and aerial organs.

It localises to the cytoplasm. The protein resides in the endoplasmic reticulum membrane. The protein localises to the nucleus. Its function is as follows. Guanine nucleotide exchange factor (GEF) for Rho and Rac. GEF proteins activate small GTPases by exchanging bound GDP for free GTP. Controls actin polymerization via the two heteromeric complexes WAVE and actin-related protein (ARP) 2/3. Involved in cytoskeletal reorganization required for cell shape (e.g. trichome and cotyledon) control and tissue development. Prevents cortical microtubules organization into parallel arrays oriented perpendicular to the axis of cell elongation to limit anisotropic cell growth during petal development, probably by triggering ARAC4/ROP2 and ARAC3/ROP6 activity. Promotes polarized growth and cell-cell adhesion in the leaf epidermis probably by promoting the formation of endoplasmic reticulum (ER) exit site (ERES) and/or trafficking between the ER and Golgi. Triggers ARAC3/ROP6 activation required for auxin-mediated inhibition of PIN2 internalization during gravitropic responses (, PubMed:22683260). This Arabidopsis thaliana (Mouse-ear cress) protein is Guanine nucleotide exchange factor SPIKE 1.